The primary structure comprises 335 residues: MPQPNRPRKGSMGFSPRKRAESEVPRFNSWPADDGEVGLQGFAGYKAGMTHVVLVDDKANAPTEGMETTVPVTVVETPPMRAAAVRLYEDTPYGKKPLTEVWADDTHESLDRTLSVPDEGGDTDELIEALDTEEIADIRVITHTVPGDTAGVPKKNPDVMETRVGGGTLADRLEFAADLIEDGGVHAFGDVFRAGEFTDAAGITKGKGTQGPVKRWGVQKRKGKHARQGWRRRIGNLGPWNPSRVRSTVPQQGQTGYHQRTELNKRLIDINDGDEPTPDGGFPNYGEVDGPYTLVKGSVPGPEQRLVRFRPAVRPNESPRLDPEVRYVSTASNQG.

Disordered stretches follow at residues 1-35, 234-256, and 312-335; these read MPQP…ADDG, IGNL…GQTG, and AVRP…SNQG. Residues 244–256 are compositionally biased toward polar residues; it reads RVRSTVPQQGQTG.

It belongs to the universal ribosomal protein uL3 family. In terms of assembly, part of the 50S ribosomal subunit. Forms a cluster with proteins L14 and L24e.

Functionally, one of the primary rRNA binding proteins, it binds directly near the 3'-end of the 23S rRNA, where it nucleates assembly of the 50S subunit. The sequence is that of Large ribosomal subunit protein uL3 from Halobacterium salinarum (strain ATCC 29341 / DSM 671 / R1).